The primary structure comprises 496 residues: Aspartyl/glutamyl-tRNA(Asn/Gln) amidotransferase subunit B (496 aa).

It belongs to the GatB/GatE family. GatB subfamily. As to quaternary structure, heterotrimer of A, B and C subunits.

It carries out the reaction L-glutamyl-tRNA(Gln) + L-glutamine + ATP + H2O = L-glutaminyl-tRNA(Gln) + L-glutamate + ADP + phosphate + H(+). It catalyses the reaction L-aspartyl-tRNA(Asn) + L-glutamine + ATP + H2O = L-asparaginyl-tRNA(Asn) + L-glutamate + ADP + phosphate + 2 H(+). Allows the formation of correctly charged Asn-tRNA(Asn) or Gln-tRNA(Gln) through the transamidation of misacylated Asp-tRNA(Asn) or Glu-tRNA(Gln) in organisms which lack either or both of asparaginyl-tRNA or glutaminyl-tRNA synthetases. The reaction takes place in the presence of glutamine and ATP through an activated phospho-Asp-tRNA(Asn) or phospho-Glu-tRNA(Gln). The protein is Aspartyl/glutamyl-tRNA(Asn/Gln) amidotransferase subunit B of Natronomonas pharaonis (strain ATCC 35678 / DSM 2160 / CIP 103997 / JCM 8858 / NBRC 14720 / NCIMB 2260 / Gabara) (Halobacterium pharaonis).